The following is a 242-amino-acid chain: 7-cyano-7-deazaguanine synthase (242 aa).

A disordered region spans residues 1-25 (MNSRKDKNSKGKNSDTKRKKSSQEN). 32 to 42 (LSGGLDSTTCL) contributes to the ATP binding site. Positions 212, 221, 224, and 227 each coordinate Zn(2+).

This sequence belongs to the QueC family. The cofactor is Zn(2+).

The enzyme catalyses 7-carboxy-7-deazaguanine + NH4(+) + ATP = 7-cyano-7-deazaguanine + ADP + phosphate + H2O + H(+). It functions in the pathway purine metabolism; 7-cyano-7-deazaguanine biosynthesis. Its function is as follows. Catalyzes the ATP-dependent conversion of 7-carboxy-7-deazaguanine (CDG) to 7-cyano-7-deazaguanine (preQ(0)). This chain is 7-cyano-7-deazaguanine synthase, found in Leptospira borgpetersenii serovar Hardjo-bovis (strain JB197).